The primary structure comprises 250 residues: Sperm-egg fusion protein Juno (250 aa).

Residues Met-1 to Ala-19 form the signal peptide. 8 disulfides stabilise this stretch: Cys-27–Cys-55, Cys-47–Cys-95, Cys-56–Cys-99, Cys-79–Cys-172, Cys-86–Cys-143, Cys-132–Cys-206, Cys-136–Cys-186, and Cys-149–Cys-166. The segment at Trp-62–Leu-81 is important for interaction with IZUMO1. An N-linked (GlcNAc...) asparagine glycan is attached at Asn-73. Ser-228 is lipidated: GPI-anchor amidated serine. Residues Ser-229–Ser-250 constitute a propeptide that is removed on maturation.

It belongs to the folate receptor family. As to quaternary structure, monomer. Interacts with IZUMO1; the interaction is direct. IZUMO1 and IZUMO1R/JUNO form a complex with 1:1 stoichiometry. Interacts with FCRL3/MAIA; FCRL3/MAIA replaces IZUMO1R/JUNO as IZUMO1 receptor after sperm-egg adhesion, thereby permitting species-specific gamete fusion. Interacts with WDR54. In terms of processing, the protein is rapidly cleaved following fertilization, being only weakly detectable in zona-intact fertilized eggs at telophase II and undetectable at the pronuclear stage. Sheding is probably required to block to polyspermy and ensuring egg fusion with a single sperm. In terms of tissue distribution, expressed in unfertilized oocytes (at protein level).

The protein localises to the cell membrane. It is found in the cell projection. Its subcellular location is the microvillus membrane. In terms of biological role, receptor for IZUMO1 present at the cell surface of oocytes (oolemma), which is essential for species-specific gamete recognition and fertilization. The IZUMO1:IZUMO1R/JUNO interaction is a necessary adhesion event between sperm and egg that is required for fertilization but is not sufficient for cell fusion. The ligand-receptor interaction probably does not act as a membrane 'fusogen'. Does not bind folate. The chain is Sperm-egg fusion protein Juno from Homo sapiens (Human).